A 149-amino-acid chain; its full sequence is Decarboxylase AgnL1 (149 aa).

Positions 30-125 constitute an EthD domain; it reads PGMSEEDYRH…VGDHEKFADT (96 aa).

It belongs to the tpcK family.

The catalysed reaction is atrochrysone carboxylate + H(+) = atrochrysone + CO2. It functions in the pathway secondary metabolite biosynthesis. Functionally, decarboxylase; part of the gene cluster that mediates the biosynthesis of agnestins, dihydroxy-xanthone metabolites. The pathway begins with the assembly and cyclization of atrochrysone thioester by the non-reducing polyketide synthase Agnpks1. The atrochrysone carboxyl ACP thioesterase AgnL7 then breaks the thioester bond and releases the atrochrysone carboxylic acid as the first enzyme-free intermediate. The decarboxylase AgnL1 then catalyzes the concerted decarboxylation-elimination required to convert atochrysone carboxylic acid into emodin anthrone, which is further oxidized to emodin by the anthrone oxygenase AgnL2. Emodin then undergoes reduction catalyzed by the oxidoreductase AgnL4 to yield the dihydroquinone tautomer which is the substrate for reduction by the short chain dehydrogenase AgnL6 reduction to produce hydroxyketone, followed by AgnL8 dehydration and likely spontaneous autoxidation to chrysophanol. Baeyer-Villiger oxidation by the oxidase AgnL3 leads to monodictyphenone via cleavage of the C-10/C-10a bond of chrysophanol. Alternative cleavage at the C-4a/C-10 bond of chrysophanol also leads to the formation some cephalone F. Further conversion to agnestins A and B, requires reduction to dihydro-monodictyphenone, oxidation to agnestin C probably via an epoxide, and rearrangement to either agnestin A or agnestin B directly, although agnestin A or agnestin B can also interconvert. Within the cluster, AgnR1 is the only unassigned oxidoreductase present which could be involved in this conversion. However, AgnR1 seems not to be involved in this step, and thus genes involved in the proposed oxidation/reduction may be located elsewhere on the genome. Further agnestin A derivatives are probably formed by spontaneous decarboxylations, dehydrations and methanolysis reactions. The chain is Decarboxylase AgnL1 from Paecilomyces divaricatus (Penicillium divaricatum).